Reading from the N-terminus, the 39-residue chain is Photosystem II reaction center protein J (39 aa).

The helical transmembrane segment at 7 to 27 (IPLWLIGTIVGILVIGLIGIY) threads the bilayer.

This sequence belongs to the PsbJ family. PSII is composed of 1 copy each of membrane proteins PsbA, PsbB, PsbC, PsbD, PsbE, PsbF, PsbH, PsbI, PsbJ, PsbK, PsbL, PsbM, PsbT, PsbX, PsbY, PsbZ, Psb30/Ycf12, at least 3 peripheral proteins of the oxygen-evolving complex and a large number of cofactors. It forms dimeric complexes.

It is found in the plastid. Its subcellular location is the chloroplast thylakoid membrane. One of the components of the core complex of photosystem II (PSII). PSII is a light-driven water:plastoquinone oxidoreductase that uses light energy to abstract electrons from H(2)O, generating O(2) and a proton gradient subsequently used for ATP formation. It consists of a core antenna complex that captures photons, and an electron transfer chain that converts photonic excitation into a charge separation. In Welwitschia mirabilis (Tree tumbo), this protein is Photosystem II reaction center protein J.